The primary structure comprises 145 residues: D-aminoacyl-tRNA deacylase (145 aa).

A Gly-cisPro motif, important for rejection of L-amino acids motif is present at residues 137-138 (GP).

It belongs to the DTD family. As to quaternary structure, homodimer.

It is found in the cytoplasm. It catalyses the reaction glycyl-tRNA(Ala) + H2O = tRNA(Ala) + glycine + H(+). The enzyme catalyses a D-aminoacyl-tRNA + H2O = a tRNA + a D-alpha-amino acid + H(+). Its function is as follows. An aminoacyl-tRNA editing enzyme that deacylates mischarged D-aminoacyl-tRNAs. Also deacylates mischarged glycyl-tRNA(Ala), protecting cells against glycine mischarging by AlaRS. Acts via tRNA-based rather than protein-based catalysis; rejects L-amino acids rather than detecting D-amino acids in the active site. By recycling D-aminoacyl-tRNA to D-amino acids and free tRNA molecules, this enzyme counteracts the toxicity associated with the formation of D-aminoacyl-tRNA entities in vivo and helps enforce protein L-homochirality. The sequence is that of D-aminoacyl-tRNA deacylase from Francisella tularensis subsp. holarctica (strain LVS).